We begin with the raw amino-acid sequence, 812 residues long: Glycerol-3-phosphate acyltransferase (812 aa).

The HXXXXD motif signature appears at 308-313; it reads CHRSHM.

This sequence belongs to the GPAT/DAPAT family.

It is found in the cell inner membrane. The enzyme catalyses sn-glycerol 3-phosphate + an acyl-CoA = a 1-acyl-sn-glycero-3-phosphate + CoA. It functions in the pathway phospholipid metabolism; CDP-diacylglycerol biosynthesis; CDP-diacylglycerol from sn-glycerol 3-phosphate: step 1/3. This chain is Glycerol-3-phosphate acyltransferase, found in Pseudoalteromonas translucida (strain TAC 125).